The sequence spans 112 residues: Class I hydrophobin 17 (112 aa).

An N-terminal signal peptide occupies residues 1 to 19; the sequence is MYSQSMVLLAAAFASFVAA. Cystine bridges form between Cys30–Cys90, Cys37–Cys84, Cys38–Cys74, and Cys91–Cys104. N-linked (GlcNAc...) asparagine glycosylation is present at Asn108.

Belongs to the fungal hydrophobin family. In terms of assembly, self-assembles to form functional amyloid fibrils called rodlets. Self-assembly into fibrillar rodlets occurs spontaneously at hydrophobic:hydrophilic interfaces and the rodlets further associate laterally to form amphipathic monolayers.

It localises to the secreted. It is found in the cell wall. In terms of biological role, aerial growth, conidiation, and dispersal of filamentous fungi in the environment rely upon a capability of their secreting small amphipathic proteins called hydrophobins (HPBs) with low sequence identity. Class I can self-assemble into an outermost layer of rodlet bundles on aerial cell surfaces, conferring cellular hydrophobicity that supports fungal growth, development and dispersal; whereas Class II form highly ordered films at water-air interfaces through intermolecular interactions but contribute nothing to the rodlet structure. Hydph17 is a class I hydrophobin involved in mycelial growth. The protein is Class I hydrophobin 17 of Pleurotus ostreatus (strain PC15) (Oyster mushroom).